The following is a 206-amino-acid chain: MGRSKSSSRWLNEHHSDVYVKKSKEDGFRSRASYKLIELDRQDKLLRPGMTVIDLGAAPGGWSQVVADVVGDQGKVVACDLLSMDSIAGVTFFQGDFTEDEMLDAILNEVNSRPVDLVISDMAPNMSGMKSVDIPKAMYLVELALDLACRVLKKNGCFVAKVFQGEGFDQILQESRGRFSSVNIRKPDASRARSREIYLVAKGFRG.

Residues glycine 60, tryptophan 62, aspartate 80, aspartate 96, and aspartate 121 each contribute to the S-adenosyl-L-methionine site. Catalysis depends on lysine 161, which acts as the Proton acceptor.

Belongs to the class I-like SAM-binding methyltransferase superfamily. RNA methyltransferase RlmE family.

The protein localises to the cytoplasm. It carries out the reaction uridine(2552) in 23S rRNA + S-adenosyl-L-methionine = 2'-O-methyluridine(2552) in 23S rRNA + S-adenosyl-L-homocysteine + H(+). Specifically methylates the uridine in position 2552 of 23S rRNA at the 2'-O position of the ribose in the fully assembled 50S ribosomal subunit. The chain is Ribosomal RNA large subunit methyltransferase E from Hahella chejuensis (strain KCTC 2396).